A 520-amino-acid polypeptide reads, in one-letter code: Pleckstrin homology domain-containing family A member 8 (520 aa).

Residues 1 to 93 (MEGVLYKWTN…WLVALGSAKA (93 aa)) enclose the PH domain. A Phosphothreonine modification is found at T139. S145 carries the post-translational modification Phosphoserine. Phosphothreonine is present on T153. Residues 255 to 268 (ISSEENTDGNTTVQ) show a composition bias toward polar residues. The interval 255–303 (ISSEENTDGNTTVQGERMKEDGEENLESHDRDLAQPGSDSVCSPESPWE) is disordered. A compositionally biased stretch (basic and acidic residues) spans 270 to 287 (ERMKEDGEENLESHDRDL). Positions 311-520 (TFFSTMNTSF…IHGLESDEVV (210 aa)) are glycolipid transfer protein homology domain.

Homodimer. Interacts with ARF1; the interaction together with phosphatidylinositol 4-phosphate binding is required for FAPP2 GlcCer transfer ability.

The protein resides in the golgi apparatus. The protein localises to the trans-Golgi network membrane. Its subcellular location is the membrane. Its function is as follows. Cargo transport protein that is required for apical transport from the trans-Golgi network (TGN). Transports AQP2 from the trans-Golgi network (TGN) to sites of AQP2 phosphorylation. Mediates the non-vesicular transport of glucosylceramide (GlcCer) from the trans-Golgi network (TGN) to the plasma membrane and plays a pivotal role in the synthesis of complex glycosphingolipids. Binding of both phosphatidylinositol 4-phosphate (PIP) and ARF1 are essential for the GlcCer transfer ability. Also required for primary cilium formation, possibly by being involved in the transport of raft lipids to the apical membrane, and for membrane tubulation. The chain is Pleckstrin homology domain-containing family A member 8 (Plekha8) from Rattus norvegicus (Rat).